The following is a 266-amino-acid chain: Gasdermin bGSDM (266 aa).

C6 carries S-palmitoyl cysteine lipidation. A run of 4 beta stranded transmembrane segments spans residues 70–86 (ISHS…AGNF), 99–117 (APKL…FSFS), 163–180 (AIDM…DVQA), and 189–205 (LGGK…TISF). The tract at residues 245-266 (GAAEPYLLRRGQVLIVEDMQAT) is C-terminal region.

It belongs to the bacterial gasdermin family. As to quaternary structure, monomer. In terms of assembly, forms large, homooligomeric ring-shaped pores when inserted in membranes. In terms of processing, cleavage by the adjacently encoded protease (probably ISF6_0256) predicted to occur between Glu-244 and Gly-245 relieves autoinhibition, releasing the N-terminus which initiates loss of cell integrity. Post-translationally, palmitoylation helps stabilize the inactive state; may self palmitoylate. Palmitoylation plays a significant role in pore formation.

The protein resides in the cytoplasm. It is found in the cell inner membrane. With respect to regulation, the full-length protein before cleavage is inactive: intramolecular interactions between the N-terminal domain and the C-terminal region as well as the lipid modification, mediate autoinhibition. The pyroptosis-like-inducing activity is carried by the released N-terminal domain (Gasdermin bGSDM, N-terminus). In terms of biological role, precursor of a pore-forming protein involved in defense against bacteriophages. Cleavage of this precursor by its dedicated, neighboring protease (probably ISF6_0256) releases the active moiety (gasdermin bGSDM, N-terminus) which inserts into membranes, forming pores and triggering cell death. Functionally, pore-forming protein that causes membrane permeabilization via a pyroptosis-like activity. Makes ring-like pores with an interior pore diameter of 300-400 Angstroms, when integrated in liposomes. This chain is Gasdermin bGSDM, found in Piscinibacter sakaiensis (Ideonella sakaiensis).